The chain runs to 812 residues: Protein let-653 (812 aa).

A signal peptide spans 1-21; the sequence is MRHPLISLLLLIAFYSTSSEA. Apple domains lie at 26–116 and 123–209; these read CNSF…WKYC and CSGE…ENNC. Cystine bridges form between cysteine 26/cysteine 116, cysteine 53/cysteine 88, cysteine 57/cysteine 72, cysteine 123/cysteine 209, cysteine 154/cysteine 178, and cysteine 158/cysteine 166. N-linked (GlcNAc...) asparagine glycans are attached at residues asparagine 172, asparagine 211, and asparagine 272. One can recognise a ZP domain in the interval 221 to 725; the sequence is ECRDNGISVS…NTCDDVEGCD (505 aa). Composition is skewed to low complexity over residues 375 to 449 and 496 to 584; these read QVTT…STTT and PTTT…PASS. Disordered regions lie at residues 375–461 and 494–584; these read QVTT…STIM and DVPT…PASS. Asparagine 771 is a glycosylation site (N-linked (GlcNAc...) asparagine).

Cleaved at the C-terminal domain. Expressed in external cuticle-producing epithelial cells including the epidermis, vulva, rectum, excretory duct and excretory pore.

Its subcellular location is the apical cell membrane. The protein localises to the secreted. It localises to the extracellular space. In terms of biological role, required for epithelial tube development and shaping. Involved in the morphogenesis and function of the three unicellular tubes of the excretory system, the canal cell, the duct cell and the pore cell. Also plays a role in cuticle development, alae formation and shaping of the vulval lumen. Required for larval development. This chain is Protein let-653, found in Caenorhabditis elegans.